The primary structure comprises 492 residues: Glutamyl-tRNA(Gln) amidotransferase subunit A (492 aa).

Catalysis depends on charge relay system residues Lys-84 and Ser-159. Ser-183 serves as the catalytic Acyl-ester intermediate.

It belongs to the amidase family. GatA subfamily. As to quaternary structure, heterotrimer of A, B and C subunits.

The catalysed reaction is L-glutamyl-tRNA(Gln) + L-glutamine + ATP + H2O = L-glutaminyl-tRNA(Gln) + L-glutamate + ADP + phosphate + H(+). Functionally, allows the formation of correctly charged Gln-tRNA(Gln) through the transamidation of misacylated Glu-tRNA(Gln) in organisms which lack glutaminyl-tRNA synthetase. The reaction takes place in the presence of glutamine and ATP through an activated gamma-phospho-Glu-tRNA(Gln). The sequence is that of Glutamyl-tRNA(Gln) amidotransferase subunit A from Anaeromyxobacter dehalogenans (strain 2CP-C).